Consider the following 139-residue polypeptide: DNA-directed RNA polymerase II subunit Rpb4 (139 aa).

Belongs to the eukaryotic RPB4 RNA polymerase subunit family. In terms of assembly, RNA polymerase II consists of 12 different subunits.

It localises to the nucleus. It is found in the chromosome. Functionally, DNA-dependent RNA polymerase catalyzes the transcription of DNA into RNA using the four ribonucleoside triphosphates as substrates. Associates with POLR2G. The chain is DNA-directed RNA polymerase II subunit Rpb4 from Drosophila melanogaster (Fruit fly).